The chain runs to 461 residues: Cysteine--tRNA ligase (461 aa).

Cys-30 provides a ligand contact to Zn(2+). A 'HIGH' region motif is present at residues 32-42 (VTVYDLCHIGH). Zn(2+) is bound by residues Cys-211, His-236, and Glu-240. The 'KMSKS' region signature appears at 268-272 (KMSKS). Lys-271 provides a ligand contact to ATP.

Belongs to the class-I aminoacyl-tRNA synthetase family. In terms of assembly, monomer. The cofactor is Zn(2+).

The protein localises to the cytoplasm. The catalysed reaction is tRNA(Cys) + L-cysteine + ATP = L-cysteinyl-tRNA(Cys) + AMP + diphosphate. This is Cysteine--tRNA ligase from Shewanella sp. (strain MR-7).